The chain runs to 303 residues: Phosphoribosylaminoimidazole-succinocarboxamide synthase (303 aa).

This sequence belongs to the SAICAR synthetase family.

It catalyses the reaction 5-amino-1-(5-phospho-D-ribosyl)imidazole-4-carboxylate + L-aspartate + ATP = (2S)-2-[5-amino-1-(5-phospho-beta-D-ribosyl)imidazole-4-carboxamido]succinate + ADP + phosphate + 2 H(+). Its pathway is purine metabolism; IMP biosynthesis via de novo pathway; 5-amino-1-(5-phospho-D-ribosyl)imidazole-4-carboxamide from 5-amino-1-(5-phospho-D-ribosyl)imidazole-4-carboxylate: step 1/2. The chain is Phosphoribosylaminoimidazole-succinocarboxamide synthase (ADE1) from Pichia angusta (Yeast).